We begin with the raw amino-acid sequence, 194 residues long: Cysteine and glycine-rich protein 3 (194 aa).

Positions 1 to 5 (MPNWG) are interaction with TCAP. Residues 10–61 (CGACEKTVYHAEEIQCNGRSFHKTCFHCMACRKALDSTTVAAHESEIYCKVC) form the LIM zinc-binding 1 domain. The short motif at 64-69 (RRYGPK) is the Nuclear localization signal element. The interaction with CLF2 stretch occupies residues 94–106 (QSPKQARSATTSS). Phosphoserine occurs at positions 95 and 153. Positions 120–171 (CPRCGKSVYAAEKVMGGGKPWHKTCFRCAICGKSLESTNVTDKDGELYCKVC) constitute an LIM zinc-binding 2 domain.

As to quaternary structure, self-associates. Oligomeric in the cytoplasm and monomeric in the nucleus. Homooligomers preferentially form along the actin cytoskeleton. Interacts with TCAP, LDHD, MYOD1, MYOG, ACTN2, NRAP, MYF6. Interacts (via N-terminus) with GLRX3 (via C-terminus) and PPP3CA; GLRX3 and calcineurin compete for interaction with CSRP3. Interacts with CFL2; the stoichiometry influences F-actin depolymerization and possibly two molecules of CFL2 can interact with one molecule of CSRP3 resulting in the highest functional impact; the interaction is stronger with phosphorylated CFL2.

Its subcellular location is the nucleus. It localises to the cytoplasm. The protein localises to the cytoskeleton. The protein resides in the myofibril. It is found in the sarcomere. Its subcellular location is the z line. In terms of biological role, positive regulator of myogenesis. Acts as a cofactor for myogenic bHLH transcription factors such as MYOD1, and probably MYOG and MYF6. Enhances the DNA-binding activity of the MYOD1:TCF3 isoform E47 complex and may promote formation of a functional MYOD1:TCF3 isoform E47:MEF2A complex involved in myogenesis. Plays a crucial and specific role in the organization of cytosolic structures in cardiomyocytes. Could play a role in mechanical stretch sensing. May be a scaffold protein that promotes the assembly of interacting proteins at Z-line structures. It is essential for calcineurin anchorage to the Z line. Required for stress-induced calcineurin-NFAT activation. The role in regulation of cytoskeleton dynamics by association with CFL2 is reported conflictingly. Proposed to contribute to the maintenance of muscle cell integrity through an actin-based mechanism. Can directly bind to actin filaments, cross-link actin filaments into bundles without polarity selectivity and protect them from dilution- and cofilin-mediated depolymerization; the function seems to involve its self-association. In vitro can inhibit PKC/PRKCA activity. Proposed to be involved in cardiac stress signaling by down-regulating excessive PKC/PRKCA signaling. The polypeptide is Cysteine and glycine-rich protein 3 (CSRP3) (Bos taurus (Bovine)).